The primary structure comprises 346 residues: Growth hormone-inducible transmembrane protein (346 aa).

The transit peptide at M1 to E45 directs the protein to the mitochondrion. Topologically, residues Y46 to R83 are mitochondrial matrix. The chain crosses the membrane as a helical span at residues W84–M104. Residues S105–H126 lie on the Mitochondrial intermembrane side of the membrane. Residues S127–A147 traverse the membrane as a helical segment. Residues R148 to S160 are Mitochondrial matrix-facing. A helical membrane pass occupies residues W161–I181. Topologically, residues S182–H191 are mitochondrial intermembrane. Residues L192–G212 traverse the membrane as a helical segment. Topologically, residues G213 to P214 are mitochondrial matrix. The chain crosses the membrane as a helical span at residues L215–M235. At C236 to M245 the chain is on the mitochondrial intermembrane side. Residues G246 to L266 traverse the membrane as a helical segment. The Mitochondrial matrix segment spans residues P267–A272. Residues G273–L293 traverse the membrane as a helical segment. Residues Y294 to K346 are Mitochondrial intermembrane-facing.

This sequence belongs to the BI1 family. As to quaternary structure, interacts with LETM1 and AFG3L2. Undergoes AFG3L2-mediated proteolytic degradation, upon hyperpolarization of mitochondria.

It localises to the mitochondrion inner membrane. It catalyses the reaction Ca(2+)(in) + 2 H(+)(out) = Ca(2+)(out) + 2 H(+)(in). The enzyme catalyses K(+)(in) + H(+)(out) = K(+)(out) + H(+)(in). Functionally, plays an important role in maintenance of mitochondrial morphology and in mediating either calcium or potassium/proton antiport. Mediates proton-dependent calcium efflux from mitochondrion. Also functions as an electroneutral mitochondrial proton/potassium exchanger. Required for the mitochondrial tubular network and cristae organization. Involved in apoptotic release of cytochrome c. Inhibits AFG3L2 proteolytic activity, stimulating respiration and stabilizing respiratory enzymes in actively respiring mitochondria. However, when mitochondria become hyperpolarized, GHITM loses its inhibitory activity toward AFG3L2 and the now active AFG3L2 turns first on GHITM and, if hyperpolarization persists, on other proteins of the mitochondria, leading to a broad remodeling of the mitochondrial proteome. This is Growth hormone-inducible transmembrane protein (Ghitm) from Mus musculus (Mouse).